Consider the following 316-residue polypeptide: MSKLNIIFAGTPEFAAQHLQALLASQHNIVAVYTQPDKPAGRGKKLQASPVKQLALQHNIPVYQPKSLRNPQAQAELNALNGDVMVVVAYGLILPEAVLHIPRYGCLNVHGSLLPRWRGAAPIQRAIWAGDQETGVTIMQMDAGLDTGDMLHKVSTKIEADETSASLYMKLAKLAPPALLAVLDGLTEQQFKPEKQDNQLANYAEKLSKQEAKLDWNLPAYQLAQNIRAFNPWPMSFLTVEVEGVEQHVKVYQATVLAHQYHAVGTVLQVDKNGIQIATSEGVLNITQLQPQGKKPMSVQDFLNGRANWFSLGKKL.

Residue 112–115 participates in (6S)-5,6,7,8-tetrahydrofolate binding; it reads SLLP.

It belongs to the Fmt family.

The catalysed reaction is L-methionyl-tRNA(fMet) + (6R)-10-formyltetrahydrofolate = N-formyl-L-methionyl-tRNA(fMet) + (6S)-5,6,7,8-tetrahydrofolate + H(+). Functionally, attaches a formyl group to the free amino group of methionyl-tRNA(fMet). The formyl group appears to play a dual role in the initiator identity of N-formylmethionyl-tRNA by promoting its recognition by IF2 and preventing the misappropriation of this tRNA by the elongation apparatus. This chain is Methionyl-tRNA formyltransferase, found in Haemophilus ducreyi (strain 35000HP / ATCC 700724).